A 509-amino-acid polypeptide reads, in one-letter code: Maturase K (509 aa).

This sequence belongs to the intron maturase 2 family. MatK subfamily.

Its subcellular location is the plastid. It is found in the chloroplast. Functionally, usually encoded in the trnK tRNA gene intron. Probably assists in splicing its own and other chloroplast group II introns. The sequence is that of Maturase K from Banksia cuneata (Quairading banksia).